An 80-amino-acid chain; its full sequence is MMKLVLFSIIVILFSLIGSIHGADVPGNYPLDSSGNKYPCTVLGDNQSCIDVCKKHGVKYGYCYSFKCWCEFLEDKNVSI.

Positions 1–22 (MMKLVLFSIIVILFSLIGSIHG) are cleaved as a signal peptide. Residues 25-80 (VPGNYPLDSSGNKYPCTVLGDNQSCIDVCKKHGVKYGYCYSFKCWCEFLEDKNVSI) enclose the LCN-type CS-alpha/beta domain. Disulfide bonds link Cys40/Cys63, Cys49/Cys68, and Cys53/Cys70.

In terms of tissue distribution, expressed by the venom gland.

Its subcellular location is the secreted. Probable neurotoxin that inhibits ion channels. Is toxic to mice. Is about 2.8% of the total protein in the venom. In Androctonus crassicauda (Arabian fat-tailed scorpion), this protein is Toxin Acra1.